The chain runs to 143 residues: Large ribosomal subunit protein uL11 (143 aa).

It belongs to the universal ribosomal protein uL11 family. Part of the ribosomal stalk of the 50S ribosomal subunit. Interacts with L10 and the large rRNA to form the base of the stalk. L10 forms an elongated spine to which L12 dimers bind in a sequential fashion forming a multimeric L10(L12)X complex. Post-translationally, one or more lysine residues are methylated.

Its function is as follows. Forms part of the ribosomal stalk which helps the ribosome interact with GTP-bound translation factors. The chain is Large ribosomal subunit protein uL11 from Pseudomonas entomophila (strain L48).